The following is a 329-amino-acid chain: Cytosolic arginine sensor for mTORC1 subunit 1 (329 aa).

A Phosphoserine; by PKB/AKT1 modification is found at Ser-14. ACT domains follow at residues 72–138 and 260–321; these read AEAT…HTLA and GELW…EVLQ. L-arginine contacts are provided by residues 111–112, Gly-274, 280–281, and 300–304; these read SV, IV, and TFNFD.

The protein belongs to the GATS family. Forms homodimers and heterodimers with CASTOR2. Interacts with the GATOR2 complex which is composed of MIOS, SEC13, SEH1L, WDR24 and WDR59; the interaction is negatively regulated by arginine. Interacts with TM4SF5; the interaction is positively regulated by leucine and is negatively regulated by arginine. In terms of processing, phosphorylation at Ser-14 by AKT1, promoting the interaction between CASTOR1 and RNF167. Post-translationally, ubiquitinated by RNF167 via 'Lys-29'-polyubiquitination, leading to its degradation, releasing the GATOR2 complex. Ubiquitination by RNF167 is promoted by phosphorylation at Ser-14 by AKT1. As to expression, widely expressed.

Its subcellular location is the cytoplasm. It is found in the cytosol. In terms of biological role, functions as an intracellular arginine sensor within the amino acid-sensing branch of the TORC1 signaling pathway. As a homodimer or a heterodimer with CASTOR2, binds and inhibits the GATOR subcomplex GATOR2 and thereby mTORC1. Binding of arginine to CASTOR1 allosterically disrupts the interaction of CASTOR1-containing dimers with GATOR2 which can in turn activate mTORC1 and the TORC1 signaling pathway. This is Cytosolic arginine sensor for mTORC1 subunit 1 from Homo sapiens (Human).